The following is a 141-amino-acid chain: uncharacterized protein (141 aa).

A compositionally biased stretch (low complexity) spans Met1–Ser39. The tract at residues Met1–Phe48 is disordered. The helical transmembrane segment at Phe109–Ile129 threads the bilayer.

The protein localises to the membrane. This is an uncharacterized protein from Dictyostelium discoideum (Social amoeba).